We begin with the raw amino-acid sequence, 486 residues long: Serine/threonine-protein kinase 33 (486 aa).

A disordered region spans residues 39–100; sequence VVEMSQTSST…WGRGNFTEGK (62 aa). A compositionally biased stretch (polar residues) spans 41–53; that stretch reads EMSQTSSTGSSEF. Positions 57 to 66 are enriched in basic and acidic residues; the sequence is PEKRKEKGAS. A compositionally biased stretch (polar residues) spans 68–80; sequence DVTSGKDSPSKSS. In terms of domain architecture, Protein kinase spans 116-381; it reads YTFGRILGQG…AKELLDNQWL (266 aa). ATP is bound by residues 122-130 and K145; that span reads LGQGSFGMV. The active-site Proton acceptor is the D238. A disordered region spans residues 402 to 451; the sequence is KNNPESDEESTTDQRDSRSGQEESKVYQPSRNVPDVSNSSDEEEGKQVGR. A Phosphoserine modification is found at S407. A compositionally biased stretch (basic and acidic residues) spans 413 to 426; the sequence is TDQRDSRSGQEESK. Positions 428–440 are enriched in polar residues; that stretch reads YQPSRNVPDVSNS.

It belongs to the protein kinase superfamily. CAMK Ser/Thr protein kinase family. CaMK subfamily. As to quaternary structure, interacts with vimentin/VIM. Post-translationally, autophosphorylated.

The protein localises to the cytoplasm. It is found in the perinuclear region. It catalyses the reaction L-seryl-[protein] + ATP = O-phospho-L-seryl-[protein] + ADP + H(+). The enzyme catalyses L-threonyl-[protein] + ATP = O-phospho-L-threonyl-[protein] + ADP + H(+). Its function is as follows. Serine/threonine protein kinase which phosphorylates vimentin/VIM. Therefore may play a specific role in the dynamic behavior of the intermediate filament cytoskeleton. The protein is Serine/threonine-protein kinase 33 (STK33) of Bos taurus (Bovine).